Here is a 199-residue protein sequence, read N- to C-terminus: NADH-quinone oxidoreductase subunit C (199 aa).

This sequence belongs to the complex I 30 kDa subunit family. NDH-1 is composed of 14 different subunits. Subunits NuoB, C, D, E, F, and G constitute the peripheral sector of the complex.

It is found in the cell inner membrane. The enzyme catalyses a quinone + NADH + 5 H(+)(in) = a quinol + NAD(+) + 4 H(+)(out). Functionally, NDH-1 shuttles electrons from NADH, via FMN and iron-sulfur (Fe-S) centers, to quinones in the respiratory chain. The immediate electron acceptor for the enzyme in this species is believed to be ubiquinone. Couples the redox reaction to proton translocation (for every two electrons transferred, four hydrogen ions are translocated across the cytoplasmic membrane), and thus conserves the redox energy in a proton gradient. In Cupriavidus pinatubonensis (strain JMP 134 / LMG 1197) (Cupriavidus necator (strain JMP 134)), this protein is NADH-quinone oxidoreductase subunit C.